Consider the following 96-residue polypeptide: Protein Vpr (96 aa).

The tract at residues 1-42 is homooligomerization; sequence MEQAPEDQGPQREPHNEWTLELLEEIKNEAVRHFPRVWLHQL. A phosphoserine; by host mark is found at Ser79, Ser94, and Ser96.

The protein belongs to the HIV-1 VPR protein family. As to quaternary structure, homooligomer, may form homodimer. Interacts with p6-gag region of the Pr55 Gag precursor protein through a (Leu-X-X)4 motif near the C-terminus of the P6gag protein. Interacts with host UNG. May interact with host RAD23A/HHR23A. Interacts with host VPRBP/DCAF1, leading to hijack the CUL4A-RBX1-DDB1-DCAF1/VPRBP complex, mediating ubiquitination of host proteins such as TERT and ZGPAT and arrest of the cell cycle in G2 phase. In terms of processing, phosphorylated on several residues by host. These phosphorylations regulate VPR activity for the nuclear import of the HIV-1 pre-integration complex.

The protein resides in the virion. It localises to the host nucleus. Its subcellular location is the host extracellular space. During virus replication, may deplete host UNG protein, and incude G2-M cell cycle arrest. Acts by targeting specific host proteins for degradation by the 26S proteasome, through association with the cellular CUL4A-DDB1 E3 ligase complex by direct interaction with host VPRPB/DCAF-1. Cell cycle arrest reportedly occurs within hours of infection and is not blocked by antiviral agents, suggesting that it is initiated by the VPR carried into the virion. Additionally, VPR induces apoptosis in a cell cycle dependent manner suggesting that these two effects are mechanistically linked. Detected in the serum and cerebrospinal fluid of AIDS patient, VPR may also induce cell death to bystander cells. In terms of biological role, during virus entry, plays a role in the transport of the viral pre-integration (PIC) complex to the host nucleus. This function is crucial for viral infection of non-dividing macrophages. May act directly at the nuclear pore complex, by binding nucleoporins phenylalanine-glycine (FG)-repeat regions. In Homo sapiens (Human), this protein is Protein Vpr.